The chain runs to 89 residues: MPVSFYDEIELEDMSYDDEKDVFHYPCPCGDRFEITRQQLKDAEDVARCPSCSLIIRVVFDPIDFEDGDEDEAPVNTIDVASQAVAAAA.

In terms of domain architecture, DPH-type MB spans 5 to 61 (FYDEIELEDMSYDDEKDVFHYPCPCGDRFEITRQQLKDAEDVARCPSCSLIIRVVFD). Positions 27, 29, 49, and 52 each coordinate Fe cation.

The protein belongs to the DPH3 family. As to quaternary structure, component of the 2-(3-amino-3-carboxypropyl)histidine synthase complex composed of DPH1, DPH2, DPH3 and a NADH-dependent reductase, predominantly CBR1. The cofactor is Fe(2+).

It is found in the cytoplasm. The protein resides in the nucleus. It carries out the reaction [3Fe-4S](1+)-[protein] + Fe(2+)-[Dph3] = [3Fe-4S](0)-[protein] + Fe(3+)-[Dph3]. The enzyme catalyses 2 [3Fe-4S](0)-[protein] + 2 Fe(2+)-[Dph3] + NADH = 2 [4Fe-4S](1+)-[protein] + 2 [Dph3] + NAD(+) + H(+). The protein operates within protein modification; peptidyl-diphthamide biosynthesis. Functionally, required for the first step of diphthamide biosynthesis, a post-translational modification of histidine which occurs in elongation factor 2. DPH1 and DPH2 transfer a 3-amino-3-carboxypropyl (ACP) group from S-adenosyl-L-methionine (SAM) to a histidine residue, the reaction is assisted by a reduction system comprising KTI11/DPH3 and a NADH-dependent reductase, predominantly CBR1. Acts as an electron donor to reduce the Fe-S cluster in DPH1-DPH2 keeping the [4Fe-4S] clusters in the active and reduced state. Restores iron to DPH1-DPH2 iron-sulfur clusters which have degraded from [4Fe-4S] to [3Fe-4S] by donating an iron atom to reform [4Fe-4S] clusters, in a manner dependent on the presence of elongation factor 2 and SAM. Associates with the elongator complex and is required for tRNA Wobble base modifications mediated by the elongator complex. The elongator complex is required for multiple tRNA modifications, including mcm5U (5-methoxycarbonylmethyl uridine), mcm5s 2U (5-methoxycarbonylmethyl-2-thiouridine), and ncm5U (5-carbamoylmethyl uridine). The sequence is that of Diphthamide biosynthesis protein 3 (DPH3) from Mycosarcoma maydis (Corn smut fungus).